Consider the following 499-residue polypeptide: NAD(P)H-quinone oxidoreductase chain 4, chloroplastic (499 aa).

14 consecutive transmembrane segments (helical) span residues 4–24 (FPWL…IFFL), 35–55 (YTIY…CYNF), 84–104 (GLSI…TLAA), 111–129 (SRLF…IGSF), 134–154 (LLLF…LLSV), 167–187 (FILY…GIGL), 208–228 (ALEI…LPII), 242–262 (HYST…YGLI), 272–292 (AHSI…IYAA), 305–325 (IAYS…SITD), 330–350 (GAVL…FLAG), 386–406 (LALP…GIIT), 416–436 (IVIT…SLSM), and 462–482 (LFVL…PDFV).

This sequence belongs to the complex I subunit 4 family.

Its subcellular location is the plastid. The protein localises to the chloroplast thylakoid membrane. The catalysed reaction is a plastoquinone + NADH + (n+1) H(+)(in) = a plastoquinol + NAD(+) + n H(+)(out). The enzyme catalyses a plastoquinone + NADPH + (n+1) H(+)(in) = a plastoquinol + NADP(+) + n H(+)(out). This is NAD(P)H-quinone oxidoreductase chain 4, chloroplastic from Citrus sinensis (Sweet orange).